A 249-amino-acid chain; its full sequence is 15,16-dihydrobiliverdin:ferredoxin oxidoreductase (249 aa).

Belongs to the HY2 family.

The enzyme catalyses 15,16-dihydrobiliverdin + oxidized 2[4Fe-4S]-[ferredoxin] = biliverdin IXalpha + reduced 2[4Fe-4S]-[ferredoxin] + 2 H(+). Catalyzes the two-electron reduction of biliverdin IX-alpha at the C15 methine bridge. The sequence is that of 15,16-dihydrobiliverdin:ferredoxin oxidoreductase from Prochlorococcus marinus (strain MIT 9303).